Reading from the N-terminus, the 252-residue chain is D-aminoacyl-tRNA deacylase (252 aa).

This sequence belongs to the DtdA deacylase family. Monomer. Zn(2+) serves as cofactor.

The catalysed reaction is a D-aminoacyl-tRNA + H2O = a tRNA + a D-alpha-amino acid + H(+). The enzyme catalyses glycyl-tRNA(Ala) + H2O = tRNA(Ala) + glycine + H(+). In terms of biological role, D-aminoacyl-tRNA deacylase with broad substrate specificity. By recycling D-aminoacyl-tRNA to D-amino acids and free tRNA molecules, this enzyme counteracts the toxicity associated with the formation of D-aminoacyl-tRNA entities in vivo. The sequence is that of D-aminoacyl-tRNA deacylase from Pyrobaculum islandicum (strain DSM 4184 / JCM 9189 / GEO3).